We begin with the raw amino-acid sequence, 399 residues long: Long-chain primary alcohol dehydrogenase AdhA (399 aa).

This sequence belongs to the iron-containing alcohol dehydrogenase family. As to quaternary structure, homotetramer. It depends on Zn(2+) as a cofactor.

The enzyme catalyses a primary alcohol + NADP(+) = an aldehyde + NADPH + H(+). Alcohol dehydrogenase active against primary long-chain alcohols. Pentan-1-ol is the optimum substrate in vitro, but also shows efficient dehydrogenase activity on propanol, hexanol, and ethanol. The protein is Long-chain primary alcohol dehydrogenase AdhA (adhA) of Thermoanaerobacter ethanolicus (Clostridium thermohydrosulfuricum).